Here is a 452-residue protein sequence, read N- to C-terminus: 5'-nucleotidase domain-containing protein 1 (452 aa).

Aspartate 16 serves as the catalytic Nucleophile. Residues aspartate 16 and aspartate 18 each coordinate Mg(2+). Aspartate 18 (proton donor) is an active-site residue. An N6-acetyllysine modification is found at lysine 171. Aspartate 313 provides a ligand contact to Mg(2+). Basic and acidic residues predominate over residues 339 to 361 (GDKDGKPEESEPEEKKGKYEGSK). Residues 339–365 (GDKDGKPEESEPEEKKGKYEGSKAKPL) are disordered.

The protein belongs to the 5'(3')-deoxyribonucleotidase family.

This chain is 5'-nucleotidase domain-containing protein 1 (NT5DC1), found in Bos taurus (Bovine).